Reading from the N-terminus, the 23-residue chain is Hemocyanin subunit 4 (23 aa).

It belongs to the tyrosinase family. Hemocyanin subfamily. Hemolymph.

It localises to the secreted. It is found in the extracellular space. Its function is as follows. Hemocyanins are copper-containing oxygen carriers occurring freely dissolved in the hemolymph of many mollusks and arthropods. The chain is Hemocyanin subunit 4 from Carcinus maenas (Common shore crab).